Here is a 509-residue protein sequence, read N- to C-terminus: Bifunctional purine biosynthesis protein PurH (509 aa).

The MGS-like domain maps to Met-1 to Val-144.

This sequence belongs to the PurH family.

It catalyses the reaction (6R)-10-formyltetrahydrofolate + 5-amino-1-(5-phospho-beta-D-ribosyl)imidazole-4-carboxamide = 5-formamido-1-(5-phospho-D-ribosyl)imidazole-4-carboxamide + (6S)-5,6,7,8-tetrahydrofolate. The enzyme catalyses IMP + H2O = 5-formamido-1-(5-phospho-D-ribosyl)imidazole-4-carboxamide. Its pathway is purine metabolism; IMP biosynthesis via de novo pathway; 5-formamido-1-(5-phospho-D-ribosyl)imidazole-4-carboxamide from 5-amino-1-(5-phospho-D-ribosyl)imidazole-4-carboxamide (10-formyl THF route): step 1/1. It participates in purine metabolism; IMP biosynthesis via de novo pathway; IMP from 5-formamido-1-(5-phospho-D-ribosyl)imidazole-4-carboxamide: step 1/1. This is Bifunctional purine biosynthesis protein PurH from Listeria innocua serovar 6a (strain ATCC BAA-680 / CLIP 11262).